Here is a 321-residue protein sequence, read N- to C-terminus: Glycerol-3-phosphate phosphatase (321 aa).

Catalysis depends on aspartate 34, which acts as the Nucleophile. The Mg(2+) site is built by aspartate 34, aspartate 36, and aspartate 260. Aspartate 36 (proton donor) is an active-site residue.

Belongs to the HAD-like hydrolase superfamily. CbbY/CbbZ/Gph/YieH family. In terms of assembly, homodimer. The cofactor is Mg(2+). As to expression, detected in all tissues including red cells, lymphocytes and cultured fibroblasts (at protein level). The highest activities occur in skeletal muscle and cardiac muscle.

It catalyses the reaction O-phospho-L-tyrosyl-[protein] + H2O = L-tyrosyl-[protein] + phosphate. It carries out the reaction sn-glycerol 1-phosphate + H2O = glycerol + phosphate. The enzyme catalyses sn-glycerol 3-phosphate + H2O = glycerol + phosphate. In terms of biological role, glycerol-3-phosphate phosphatase hydrolyzing glycerol-3-phosphate into glycerol. Thereby, regulates the cellular levels of glycerol-3-phosphate a metabolic intermediate of glucose, lipid and energy metabolism. Was also shown to have a 2-phosphoglycolate phosphatase activity and a tyrosine-protein phosphatase activity. However, their physiological relevance is unclear. In vitro, also has a phosphatase activity toward ADP, ATP, GDP and GTP. In Homo sapiens (Human), this protein is Glycerol-3-phosphate phosphatase.